A 313-amino-acid polypeptide reads, in one-letter code: Ornithine carbamoyltransferase (313 aa).

Residues Ser-61–Thr-64, Gln-88, Arg-112, and His-139–Gln-142 contribute to the carbamoyl phosphate site. L-ornithine is bound by residues Asn-170, Asp-228, and Ser-232–Met-233. Carbamoyl phosphate-binding positions include Cys-268–Leu-269 and Arg-296.

Belongs to the aspartate/ornithine carbamoyltransferase superfamily. OTCase family.

It localises to the cytoplasm. It catalyses the reaction carbamoyl phosphate + L-ornithine = L-citrulline + phosphate + H(+). It participates in amino-acid biosynthesis; L-arginine biosynthesis; L-arginine from L-ornithine and carbamoyl phosphate: step 1/3. In terms of biological role, reversibly catalyzes the transfer of the carbamoyl group from carbamoyl phosphate (CP) to the N(epsilon) atom of ornithine (ORN) to produce L-citrulline. The chain is Ornithine carbamoyltransferase from Bordetella avium (strain 197N).